Here is a 391-residue protein sequence, read N- to C-terminus: Argininosuccinate synthase (391 aa).

An ATP-binding site is contributed by 6–14; sequence AYSGGLDTT. Tyr84 serves as a coordination point for L-citrulline. Gly114 is a binding site for ATP. L-aspartate contacts are provided by Thr116, Asn120, and Asp121. Residue Asn120 participates in L-citrulline binding. Arg124, Ser171, Ser180, Glu253, and Tyr265 together coordinate L-citrulline.

This sequence belongs to the argininosuccinate synthase family. Type 1 subfamily. Homotetramer.

It localises to the cytoplasm. The enzyme catalyses L-citrulline + L-aspartate + ATP = 2-(N(omega)-L-arginino)succinate + AMP + diphosphate + H(+). It functions in the pathway amino-acid biosynthesis; L-arginine biosynthesis; L-arginine from L-ornithine and carbamoyl phosphate: step 2/3. This is Argininosuccinate synthase from Sulfolobus acidocaldarius (strain ATCC 33909 / DSM 639 / JCM 8929 / NBRC 15157 / NCIMB 11770).